The sequence spans 160 residues: Cyclic pyranopterin monophosphate synthase (160 aa).

Substrate is bound by residues 76–78 (LCH) and 114–115 (ME). D129 is a catalytic residue.

It belongs to the MoaC family. Homohexamer; trimer of dimers.

The enzyme catalyses (8S)-3',8-cyclo-7,8-dihydroguanosine 5'-triphosphate = cyclic pyranopterin phosphate + diphosphate. Its pathway is cofactor biosynthesis; molybdopterin biosynthesis. Functionally, catalyzes the conversion of (8S)-3',8-cyclo-7,8-dihydroguanosine 5'-triphosphate to cyclic pyranopterin monophosphate (cPMP). The sequence is that of Cyclic pyranopterin monophosphate synthase from Saccharophagus degradans (strain 2-40 / ATCC 43961 / DSM 17024).